A 95-amino-acid polypeptide reads, in one-letter code: Glutamyl-tRNA(Gln) amidotransferase subunit C (95 aa).

Belongs to the GatC family. As to quaternary structure, heterotrimer of A, B and C subunits.

The enzyme catalyses L-glutamyl-tRNA(Gln) + L-glutamine + ATP + H2O = L-glutaminyl-tRNA(Gln) + L-glutamate + ADP + phosphate + H(+). The catalysed reaction is L-aspartyl-tRNA(Asn) + L-glutamine + ATP + H2O = L-asparaginyl-tRNA(Asn) + L-glutamate + ADP + phosphate + 2 H(+). Its function is as follows. Allows the formation of correctly charged Asn-tRNA(Asn) or Gln-tRNA(Gln) through the transamidation of misacylated Asp-tRNA(Asn) or Glu-tRNA(Gln) in organisms which lack either or both of asparaginyl-tRNA or glutaminyl-tRNA synthetases. The reaction takes place in the presence of glutamine and ATP through an activated phospho-Asp-tRNA(Asn) or phospho-Glu-tRNA(Gln). This chain is Glutamyl-tRNA(Gln) amidotransferase subunit C, found in Mesorhizobium japonicum (strain LMG 29417 / CECT 9101 / MAFF 303099) (Mesorhizobium loti (strain MAFF 303099)).